A 329-amino-acid polypeptide reads, in one-letter code: Transposable element Tc3 transposase (329 aa).

Residues Pro-2–Thr-135 mediate DNA binding.

This sequence belongs to the transposase 5 family. In terms of assembly, homodimer or homotetramer.

The protein localises to the nucleus. Binds specifically to the terminal nucleotides of the TC3 inverted repeat. Its expression results in frequent excision and transposition of endogenous TC3 elements. TC3 transposase acts by making double strand breaks at the ends of TC3 element. The excised element would then be inserted into a target sequence. This Caenorhabditis elegans protein is Transposable element Tc3 transposase (tc3a).